The chain runs to 192 residues: Phosphomevalonate kinase (192 aa).

ATP contacts are provided by residues 17–23 (KRKSGKD) and arginine 141. Residue asparagine 170 coordinates substrate. ATP contacts are provided by histidine 171, arginine 176, and glutamine 180.

As to quaternary structure, monomer. Heart, liver, skeletal muscle, kidney, and pancreas. Lower level in brain, placenta and lung.

It is found in the cytoplasm. The protein localises to the cytosol. It carries out the reaction (R)-5-phosphomevalonate + ATP = (R)-5-diphosphomevalonate + ADP. It functions in the pathway isoprenoid biosynthesis; isopentenyl diphosphate biosynthesis via mevalonate pathway; isopentenyl diphosphate from (R)-mevalonate: step 2/3. Catalyzes the reversible ATP-dependent phosphorylation of mevalonate 5-phosphate to produce mevalonate diphosphate and ADP, a key step in the mevalonic acid mediated biosynthesis of isopentenyl diphosphate and other polyisoprenoid metabolites. This chain is Phosphomevalonate kinase (PMVK), found in Homo sapiens (Human).